A 620-amino-acid chain; its full sequence is uncharacterized protein (620 aa).

4 consecutive transmembrane segments (helical) span residues 66 to 86, 238 to 258, 546 to 566, and 584 to 604; these read LLNF…NQII, FFDA…NLLW, LGII…VWTI, and IIFI…ILVF.

Its subcellular location is the cell membrane. This is an uncharacterized protein from Mycoplasma genitalium (strain ATCC 33530 / DSM 19775 / NCTC 10195 / G37) (Mycoplasmoides genitalium).